A 439-amino-acid chain; its full sequence is CBL-interacting serine/threonine-protein kinase 26 (439 aa).

The Protein kinase domain occupies 13–268; sequence YEVGKTLGQG…IPEVLGDAWF (256 aa). ATP-binding positions include 19–27 and Lys42; that span reads LGQGTFAKV. Catalysis depends on Asp136, which acts as the Proton acceptor. The interval 154 to 183 is activation loop; that stretch reads DFGLSALSRQVRGDGLLHTACGTPNYAAPE. Ser158 carries the phosphoserine modification. Residue Thr172 is modified to Phosphothreonine. The NAF domain occupies 306-330; the sequence is EQPTSMNAFELISMSRALDLGNLFE. Residues 336-365 are PPI; it reads KRETRFAAKGAANDLVQKIEEASKPLGFDI.

The protein belongs to the protein kinase superfamily. CAMK Ser/Thr protein kinase family. SNF1 subfamily. As to quaternary structure, interacts with RBOHF (via N-terminus). The cofactor is Mn(2+).

The protein resides in the cell membrane. The catalysed reaction is L-seryl-[protein] + ATP = O-phospho-L-seryl-[protein] + ADP + H(+). It carries out the reaction L-threonyl-[protein] + ATP = O-phospho-L-threonyl-[protein] + ADP + H(+). In terms of biological role, CIPK serine-threonine protein kinases interact with CBL proteins. Binding of a CBL protein to the regulatory NAF domain of CIPK protein lead to the activation of the kinase in a calcium-dependent manner. Involved in the calcium-dependent regulation of reactive oxygen species production by the NADPH oxidase RBOHF. This chain is CBL-interacting serine/threonine-protein kinase 26 (CIPK26), found in Arabidopsis thaliana (Mouse-ear cress).